We begin with the raw amino-acid sequence, 344 residues long: Arginine N-succinyltransferase (344 aa).

Position 125 (leucine 125) interacts with succinyl-CoA. Catalysis depends on histidine 229, which acts as the Proton donor.

The protein belongs to the arginine N-succinyltransferase family.

The enzyme catalyses succinyl-CoA + L-arginine = N(2)-succinyl-L-arginine + CoA + H(+). It participates in amino-acid degradation; L-arginine degradation via AST pathway; L-glutamate and succinate from L-arginine: step 1/5. Its function is as follows. Catalyzes the transfer of succinyl-CoA to arginine to produce N(2)-succinylarginine. The polypeptide is Arginine N-succinyltransferase (Escherichia coli O6:K15:H31 (strain 536 / UPEC)).